The primary structure comprises 185 residues: Ribosome-recycling factor (185 aa).

This sequence belongs to the RRF family.

Its subcellular location is the cytoplasm. Its function is as follows. Responsible for the release of ribosomes from messenger RNA at the termination of protein biosynthesis. May increase the efficiency of translation by recycling ribosomes from one round of translation to another. In Campylobacter jejuni (strain RM1221), this protein is Ribosome-recycling factor.